The chain runs to 161 residues: 2-C-methyl-D-erythritol 2,4-cyclodiphosphate synthase (161 aa).

The a divalent metal cation site is built by Asp13 and His15. Residues 13–15 and 40–41 contribute to the 4-CDP-2-C-methyl-D-erythritol 2-phosphate site; these read DAH and HS. Residue His48 coordinates a divalent metal cation. 62 to 64 is a 4-CDP-2-C-methyl-D-erythritol 2-phosphate binding site; that stretch reads DIG.

This sequence belongs to the IspF family. As to quaternary structure, homotrimer. A divalent metal cation is required as a cofactor.

It catalyses the reaction 4-CDP-2-C-methyl-D-erythritol 2-phosphate = 2-C-methyl-D-erythritol 2,4-cyclic diphosphate + CMP. Its pathway is isoprenoid biosynthesis; isopentenyl diphosphate biosynthesis via DXP pathway; isopentenyl diphosphate from 1-deoxy-D-xylulose 5-phosphate: step 4/6. Its function is as follows. Involved in the biosynthesis of isopentenyl diphosphate (IPP) and dimethylallyl diphosphate (DMAPP), two major building blocks of isoprenoid compounds. Catalyzes the conversion of 4-diphosphocytidyl-2-C-methyl-D-erythritol 2-phosphate (CDP-ME2P) to 2-C-methyl-D-erythritol 2,4-cyclodiphosphate (ME-CPP) with a corresponding release of cytidine 5-monophosphate (CMP). The polypeptide is 2-C-methyl-D-erythritol 2,4-cyclodiphosphate synthase (Deinococcus radiodurans (strain ATCC 13939 / DSM 20539 / JCM 16871 / CCUG 27074 / LMG 4051 / NBRC 15346 / NCIMB 9279 / VKM B-1422 / R1)).